A 238-amino-acid chain; its full sequence is 1-(5-phosphoribosyl)-5-[(5-phosphoribosylamino)methylideneamino] imidazole-4-carboxamide isomerase (238 aa).

D7 (proton acceptor) is an active-site residue. The Proton donor role is filled by D129.

It belongs to the HisA/HisF family.

Its subcellular location is the cytoplasm. It catalyses the reaction 1-(5-phospho-beta-D-ribosyl)-5-[(5-phospho-beta-D-ribosylamino)methylideneamino]imidazole-4-carboxamide = 5-[(5-phospho-1-deoxy-D-ribulos-1-ylimino)methylamino]-1-(5-phospho-beta-D-ribosyl)imidazole-4-carboxamide. It participates in amino-acid biosynthesis; L-histidine biosynthesis; L-histidine from 5-phospho-alpha-D-ribose 1-diphosphate: step 4/9. This is 1-(5-phosphoribosyl)-5-[(5-phosphoribosylamino)methylideneamino] imidazole-4-carboxamide isomerase from Leuconostoc mesenteroides subsp. mesenteroides (strain ATCC 8293 / DSM 20343 / BCRC 11652 / CCM 1803 / JCM 6124 / NCDO 523 / NBRC 100496 / NCIMB 8023 / NCTC 12954 / NRRL B-1118 / 37Y).